The sequence spans 975 residues: MDSGDIEEAGGNGEEEFRSGPRLGGSKYRPVVAHDRAVVEMSSIDPGSSSSTLKNIKVVAPGDVGAGVRGPEDGVNGHQKESKLELFGFDSLVNILGLKSMTGEQIQAPSSPRDGEDISITQGHPKPPALKMGTMMGVFVPCLQNILGIIYYIRFTWIVGMAGIGQGLVLVFLCGLCTFLTTISLSAIATNGAMKGGGPYYLIGRALGPEVGISIGLCFFLGNAVAGALYVLGAVETFLKAFPAAGIFRETITKVNGTAVSESIQSPNSHDLQVYGIVVTILLCFIVFGGVKMINRVAPAFLVPVLLSIFCIFIGIFLAKTDDPDNGITGLRLKSFKDNWGSAYQMTNDAGIPDPTGGTYWSFNELVGLFFPAVTGIMAGSNRSASLKDTQKSIPVGTLAATLTTTSLYLISVLFFGAVATRDKLLTDRLLTATIAWPFPAIVHVGIILSTLGAALQSLTGAPRLLAAIANDDILPILNYFKVADTSEPHIATLFTAFICIGCVVIGNLDLITPTVTMFYLLCYSGVNLSCFLLDLLDAPSWRPRWKYHHWSLSFVGASLCIVIMFLISWSFTVVAIALASLIYKYVGLKGKAGDWGDGFKSAYFQLALRSLRSLGANQVHPKNWYPIPLVFCRPWGQLPENVPCHPKLADFANCMKKKGRGMSIFVSILDGDYYECAEEAKEACKQLATYIEYKRCEGVAEIVVAPNMTEGFRGIIQTMGLGNLKPNIVVMRYPEIWRRENLTEIPSTFVGIINDCITANKAVVIIKGLDEWPNEYQRQYGTIDLYWIVRDGGLMLLLSQLLLTKESFESCKIQLFCIAEEDSDAEALKADVKKFLYDLRMHAEVIVVTMKSWDIRSEGNSQEDSLEAFDAAQRRISDYLGEIKRQGSNPLLANGKPMVVNEQQVEKFLYTMLKLNSTILSYSRMAAVVLVSLPPPPLNHPAYFYMEYMDLLVENVPRMLIVRGYHRDVVTLFT.

2 disordered regions span residues 1-29 (MDSGDIEEAGGNGEEEFRSGPRLGGSKYR) and 104-124 (EQIQAPSSPRDGEDISITQGH). Residues 1–132 (MDSGDIEEAG…GHPKPPALKM (132 aa)) are Cytoplasmic-facing. The helical transmembrane segment at 133 to 153 (GTMMGVFVPCLQNILGIIYYI) threads the bilayer. Topologically, residues 154 to 167 (RFTWIVGMAGIGQG) are extracellular. The chain crosses the membrane as a helical span at residues 168–188 (LVLVFLCGLCTFLTTISLSAI). Topologically, residues 189–214 (ATNGAMKGGGPYYLIGRALGPEVGIS) are cytoplasmic. Residues 215–235 (IGLCFFLGNAVAGALYVLGAV) form a helical membrane-spanning segment. Over 236 to 273 (ETFLKAFPAAGIFRETITKVNGTAVSESIQSPNSHDLQ) the chain is Extracellular. N-linked (GlcNAc...) asparagine glycosylation occurs at Asn256. Residues 274–294 (VYGIVVTILLCFIVFGGVKMI) traverse the membrane as a helical segment. Residues 295–296 (NR) are Cytoplasmic-facing. The helical transmembrane segment at 297 to 317 (VAPAFLVPVLLSIFCIFIGIF) threads the bilayer. Topologically, residues 318-359 (LAKTDDPDNGITGLRLKSFKDNWGSAYQMTNDAGIPDPTGGT) are extracellular. A helical transmembrane segment spans residues 360–380 (YWSFNELVGLFFPAVTGIMAG). Residues 381-398 (SNRSASLKDTQKSIPVGT) lie on the Cytoplasmic side of the membrane. The chain crosses the membrane as a helical span at residues 399–419 (LAATLTTTSLYLISVLFFGAV). Topologically, residues 420 to 434 (ATRDKLLTDRLLTAT) are extracellular. Residues 435-455 (IAWPFPAIVHVGIILSTLGAA) traverse the membrane as a helical segment. Topologically, residues 456–490 (LQSLTGAPRLLAAIANDDILPILNYFKVADTSEPH) are cytoplasmic. A helical membrane pass occupies residues 491 to 511 (IATLFTAFICIGCVVIGNLDL). The Extracellular portion of the chain corresponds to 512–515 (ITPT). A helical transmembrane segment spans residues 516-536 (VTMFYLLCYSGVNLSCFLLDL). The Cytoplasmic portion of the chain corresponds to 537–544 (LDAPSWRP). Residues 545-565 (RWKYHHWSLSFVGASLCIVIM) traverse the membrane as a helical segment. At 566–571 (FLISWS) the chain is on the extracellular side. The chain crosses the membrane as a helical span at residues 572 to 592 (FTVVAIALASLIYKYVGLKGK). The Cytoplasmic segment spans residues 593–975 (AGDWGDGFKS…YHRDVVTLFT (383 aa)).

Belongs to the SLC12A transporter family. In terms of tissue distribution, expressed in young seedlings cotyledon tips, plant vasculature, root tips and axillary buds. Expressed in root vascular strand in the pericycle and other parenchyma cells bordering xylem vessels. Expressed in the xylem/symplast boundaries of rosette stems, rosette leaves and cauline leaves. Expressed in stipules, trichomes and hydathodes. Expressed in pollen grains.

Its subcellular location is the membrane. In terms of biological role, cation/chloride cotransporter that mediates potassium-chloride and sodium-chloride cotransports. Involved in plant development and Cl(-) homeostasis. May be involved in long distance Cl(-) transport. Does not function as an H(+)-dependent cotransporter. This is Cation-chloride cotransporter 1 (CCC1) from Arabidopsis thaliana (Mouse-ear cress).